The chain runs to 449 residues: Ribosomal protein uS12 methylthiotransferase RimO (449 aa).

One can recognise an MTTase N-terminal domain in the interval 15–125; that stretch reads PRISFVSLGC…VLAAVHEAVP (111 aa). [4Fe-4S] cluster contacts are provided by Cys-24, Cys-60, Cys-89, Cys-156, Cys-160, and Cys-163. In terms of domain architecture, Radical SAM core spans 142-379; sequence LTPRHYAYLK…MRTQQKVSAR (238 aa). The region spanning 382–448 is the TRAM domain; the sequence is KRKVGTRQSV…PYDLSGTAVG (67 aa).

It belongs to the methylthiotransferase family. RimO subfamily. [4Fe-4S] cluster serves as cofactor.

Its subcellular location is the cytoplasm. It catalyses the reaction L-aspartate(89)-[ribosomal protein uS12]-hydrogen + (sulfur carrier)-SH + AH2 + 2 S-adenosyl-L-methionine = 3-methylsulfanyl-L-aspartate(89)-[ribosomal protein uS12]-hydrogen + (sulfur carrier)-H + 5'-deoxyadenosine + L-methionine + A + S-adenosyl-L-homocysteine + 2 H(+). Catalyzes the methylthiolation of an aspartic acid residue of ribosomal protein uS12. The chain is Ribosomal protein uS12 methylthiotransferase RimO from Xanthobacter autotrophicus (strain ATCC BAA-1158 / Py2).